The following is a 197-amino-acid chain: Carnitine operon protein CaiE (197 aa).

Residues 177–197 (TAPEANRPRLRGTTEVKPKGQ) are disordered. Residues 188–197 (GTTEVKPKGQ) are compositionally biased toward basic and acidic residues.

The protein belongs to the transferase hexapeptide repeat family.

It functions in the pathway amine and polyamine metabolism; carnitine metabolism. Functionally, overproduction of CaiE stimulates the activity of CaiB and CaiD. The protein is Carnitine operon protein CaiE of Proteus sp. (strain LE138).